The following is a 333-amino-acid chain: Ornithine carbamoyltransferase (333 aa).

Residues 57–60 (STRT), glutamine 83, arginine 107, and 134–137 (HPTQ) contribute to the carbamoyl phosphate site. Residues asparagine 168, aspartate 232, and 236–237 (SM) each bind L-ornithine. Carbamoyl phosphate is bound by residues 274–275 (CL) and arginine 319.

Belongs to the aspartate/ornithine carbamoyltransferase superfamily. OTCase family.

It localises to the cytoplasm. The enzyme catalyses carbamoyl phosphate + L-ornithine = L-citrulline + phosphate + H(+). The protein operates within amino-acid biosynthesis; L-arginine biosynthesis; L-arginine from L-ornithine and carbamoyl phosphate: step 1/3. Reversibly catalyzes the transfer of the carbamoyl group from carbamoyl phosphate (CP) to the N(epsilon) atom of ornithine (ORN) to produce L-citrulline. In Photobacterium profundum (strain SS9), this protein is Ornithine carbamoyltransferase.